The following is a 257-amino-acid chain: MSSAPNGRKKRPSRSTRSSIFQISKPPLQSGDWERRGSGSESAHKTQRALDDCKMLVQEFNTQVALYRELVISIGDVSVSCPSLRAEMHKTRTKGCEMARQAHQKLAAISGPEDGEIHPEICRLYIQLQCCLEMYTTEMLKSICLLGSLQFHRKGKEASGGAKSLDSKIEENAETPALEDSLSSPLDSQQQSWQVATDIENTERDMREMKNLLSKLRETMPLPLKNQDDSSLLNLTPYPMVRRRKRRFFGLCCLVSS.

2 disordered regions span residues 1–45 (MSSA…SAHK) and 172–191 (NAETPALEDSLSSPLDSQQQ). Over residues 32 to 45 (DWERRGSGSESAHK) the composition is skewed to basic and acidic residues. The span at 180 to 191 (DSLSSPLDSQQQ) shows a compositional bias: low complexity. The short motif at 242 to 247 (RRRKRR) is the Nuclear localization signal element. Residues cysteine 252 and cysteine 253 are each lipidated (S-palmitoyl cysteine).

This sequence belongs to the RGS7BP/RGS9BP family. In terms of assembly, interacts with 'R7' family proteins RGS6, RGS7, RGS9 and RGS11. Component of some R7-Gbeta5 complex composed of some R7 protein (RGS6, RGS7, RGS9 or RGS11), Gbeta5 (GNB5) and RGS7BP. Palmitoylated. Undergoes rapid palmitoylation turnover. De novo and turnover palmitoylation are both mediated by ZDHHC2. Palmitoylation regulates the cell membrane and nuclear shuttling and the regulation of GPCR signaling. Upon depalmitoylation, it is targeted from the plasma membrane into the nucleus. GPCR signaling inhibits depalmitoylation and promotes localization to the plasma membrane.

It is found in the nucleus. Its subcellular location is the cytoplasm. It localises to the cell membrane. Functionally, regulator of G protein-coupled receptor (GPCR) signaling. Regulatory subunit of the R7-Gbeta5 complexes that acts by controlling the subcellular location of the R7-Gbeta5 complexes. When palmitoylated, it targets the R7-Gbeta5 complexes to the plasma membrane, leading to inhibit G protein alpha subunits. When it is unpalmitoylated, the R7-Gbeta5 complexes undergo a nuclear/cytoplasmic shuttling. May also act by controlling the proteolytic stability of R7 proteins, probably by protecting them from degradation. The chain is Regulator of G-protein signaling 7-binding protein (Rgs7bp) from Rattus norvegicus (Rat).